A 548-amino-acid chain; its full sequence is Natural resistance-associated macrophage protein 1 (548 aa).

A compositionally biased stretch (polar residues) spans 1 to 12 (MSGDTGTPNQGG). A disordered region spans residues 1-38 (MSGDTGTPNQGGTRYGSISSPPSPGPQQAPPGGTYLSE). Residues 1–55 (MSGDTGTPNQGGTRYGSISSPPSPGPQQAPPGGTYLSEKIPIPDTESGAFSLRKL) lie on the Cytoplasmic side of the membrane. Residues 56 to 73 (WAFTGPGFLMSIAFLDPG) form a helical membrane-spanning segment. Over 74–82 (NIESDLQAG) the chain is Extracellular. A helical membrane pass occupies residues 83–102 (AVAGFKLLWVLLWATVLGLL). Over 103 to 139 (CQRLAARLGVVTGKDLGEVCHLYYPKVPRTLLWLTIE) the chain is Cytoplasmic. Residues 140–160 (LAIVGSDMQEVIGTAIAFSLL) form a helical membrane-spanning segment. Over 161–164 (SAGR) the chain is Extracellular. Residues 165 to 184 (IPLWGGVLITIVDTFFFLFL) traverse the membrane as a helical segment. Residues 185 to 193 (DNYGLRKLE) lie on the Cytoplasmic side of the membrane. The helical transmembrane segment at 194-214 (AFFGFLITIMALTFGYEYVVA) threads the bilayer. Residues 215–237 (RPAQGALLQGLFLPSCPGCGQPE) lie on the Extracellular side of the membrane. A helical membrane pass occupies residues 238 to 256 (LLQAVGIVGAIIMPHNIYL). The Cytoplasmic segment spans residues 257-284 (HSSLVKSREVDRSRRADIREANMYFLIE). The chain crosses the membrane as a helical span at residues 285 to 304 (ATIALSVSFFINLFVMAVFG). Residues 305–346 (QAFYKQTNQAAFNICANSSLHDYATIFPRDNLTVAVDIYQGG) lie on the Extracellular side of the membrane. Residues Asn321 and Asn335 are each glycosylated (N-linked (GlcNAc...) asparagine). A helical transmembrane segment spans residues 347–366 (VILGCLFGPAALYIWAVGLL). Topologically, residues 367-397 (AAGQSSTMTGTYAGQFVMEGFLKLRWSRFAR) are cytoplasmic. Residues 398 to 415 (VLLTRSCAIPPTVLLAVF) traverse the membrane as a helical segment. Residues 416 to 426 (RDLQDLSGLND) lie on the Extracellular side of the membrane. The chain crosses the membrane as a helical span at residues 427–447 (LLNVLQSLLLPFAVLPILTFT). Topologically, residues 448-463 (SMPALMQEFANGLVSK) are cytoplasmic. Residues 464-485 (IITSSIMVLVCAVNLYFVISYV) form a helical membrane-spanning segment. The Extracellular portion of the chain corresponds to 486-493 (PSLPHPAY). A helical membrane pass occupies residues 494–513 (FSLVALLAAAYLGLTTYLVW). The Cytoplasmic portion of the chain corresponds to 514-548 (TCLITQGATRLAHSSHQRFLYGLPGEDQEEGRTSG).

Belongs to the NRAMP family.

The protein localises to the late endosome membrane. It localises to the lysosome membrane. It carries out the reaction Zn(2+)(in) + H(+)(out) = Zn(2+)(out) + H(+)(in). The enzyme catalyses Fe(2+)(in) + H(+)(out) = Fe(2+)(out) + H(+)(in). The catalysed reaction is Mn(2+)(in) + H(+)(out) = Mn(2+)(out) + H(+)(in). Its function is as follows. Macrophage-specific antiporter that fluxes metal ions in either direction against a proton gradient. Localized to late endosomal lysosomal membranes, delivers bivalent cations from the cytosol into these acidic compartments where they may directly affect antimicrobial activity. Involved in iron metabolism and host natural resistance to infection with intracellular parasites. Pathogen resistance involves sequestration of Fe(2+) and Mn(2+), cofactors of both prokaryotic and eukaryotic catalases and superoxide dismutases, not only to protect the macrophage against its own generation of reactive oxygen species, but to deny the cations to the pathogen for synthesis of its protective enzymes. The protein is Natural resistance-associated macrophage protein 1 (SLC11A1) of Ovis aries (Sheep).